We begin with the raw amino-acid sequence, 345 residues long: 3-isopropylmalate dehydrogenase (345 aa).

NAD(+) is bound at residue 74–87; the sequence is GPKWDGLPRKIRPE. Residues R94, R104, R132, and D217 each contribute to the substrate site. Residues D217, D241, and D245 each coordinate Mg(2+). 274–286 lines the NAD(+) pocket; sequence GSAPDIAGKGIAN.

This sequence belongs to the isocitrate and isopropylmalate dehydrogenases family. LeuB type 1 subfamily. As to quaternary structure, homodimer. Mg(2+) is required as a cofactor. Requires Mn(2+) as cofactor.

The protein resides in the cytoplasm. The catalysed reaction is (2R,3S)-3-isopropylmalate + NAD(+) = 4-methyl-2-oxopentanoate + CO2 + NADH. It functions in the pathway amino-acid biosynthesis; L-leucine biosynthesis; L-leucine from 3-methyl-2-oxobutanoate: step 3/4. In terms of biological role, catalyzes the oxidation of 3-carboxy-2-hydroxy-4-methylpentanoate (3-isopropylmalate) to 3-carboxy-4-methyl-2-oxopentanoate. The product decarboxylates to 4-methyl-2 oxopentanoate. The polypeptide is 3-isopropylmalate dehydrogenase (leuB) (Thermus thermophilus (strain ATCC 27634 / DSM 579 / HB8)).